The chain runs to 788 residues: Cyclin-F (788 aa).

A Nuclear localization signal 1 motif is present at residues 20 to 28 (KRRIRRRPR). In terms of domain architecture, F-box spans 29–76 (NLTILNLPEDALFHILKWLSVGDILAVRAVHSHLKYLVDNHASVWACA). The region spanning 291-405 (HAVNKQRVFS…EVVSALDGKI (115 aa)) is the Cyclin N-terminal domain. 4 consecutive short sequence motifs (d box) follow at residues 310-313 (RYIL), 343-346 (RRRL), 349-352 (RYRL), and 351-354 (RLQL). Disordered stretches follow at residues 566–585 (SARR…RGSF) and 700–788 (TSGY…FLKL). Positions 568 to 574 (RRTKRKR) match the Nuclear localization signal 2 motif. The tract at residues 582–766 (RGSFVTTPTA…ESCAPQQQVK (185 aa)) is PEST. Composition is skewed to polar residues over residues 700-716 (TSGY…DSGR) and 723-738 (RSTS…NTQP). The D box 5 signature appears at 767–770 (RKNL).

The protein belongs to the cyclin family. Cyclin AB subfamily. In terms of assembly, component of the SCF(CCNF) complex consisting of CUL1, RBX1, SKP1 and CCNF. Interacts with SKP1. Interacts with CUL1. Interacts with CCNB1; interaction is required for nuclear localization of CCNB1. Interacts with CCP110; this interaction leads to CCP110 ubiquitination and degradation via the proteasome pathway. Interacts (via the Cyclin N-terminal domain) with MYBL2/BMYB. Interacts with FZR1/CDH1 (via N-terminus). Interacts with RRM2 (via Cy motif and when phosphorylated at 'Thr-33'); the interaction occurs exclusively in G2 and early M. Interacts with CDC6 (via Cy motif); the interaction takes place during G2 and M phase. Post-translationally, degraded when the spindle assembly checkpoint is activated during the G2-M transition. Degradation is not dependent on the proteasome or ubiquitin and depends on the C-terminal PEST sequence. Phosphorylated just before cells enter into mitosis. In terms of processing, ubiquitinated by the anaphase-promoting complex (APC/C); leading to its degradation by the proteasome.

The protein resides in the nucleus. It localises to the cytoplasm. Its subcellular location is the perinuclear region. The protein localises to the cytoskeleton. It is found in the microtubule organizing center. The protein resides in the centrosome. It localises to the centriole. Its function is as follows. Substrate recognition component of a SCF (SKP1-CUL1-F-box protein) E3 ubiquitin-protein ligase complex which mediates the ubiquitination and subsequent proteasomal degradation of target proteins. The SCF(CCNF) E3 ubiquitin-protein ligase complex is an integral component of the ubiquitin proteasome system (UPS) and links proteasome degradation to the cell cycle. Mediates the substrate recognition and the proteasomal degradation of various target proteins involved in the regulation of cell cycle progression and in the maintenance of genome stability. Mediates the ubiquitination and subsequent proteasomal degradation of CP110 during G2 phase, thereby acting as an inhibitor of centrosome reduplication. In G2, mediates the ubiquitination and proteasomal degradation of CDC6, thereby suppressing DNA re-replication and preventing genome instability. Involved in the ubiquitination and degradation of the substrate adapter CDH1 of the anaphase-promoting complex (APC/C), thereby acting as an antagonist of APC/C in regulating G1 progression and S phase entry. May play a role in the G2 cell cycle checkpoint control after DNA damage, possibly by promoting the ubiquitination of MYBL2/BMYB. The protein is Cyclin-F (CCNF) of Bos taurus (Bovine).